The following is a 108-amino-acid chain: MFKGGMGNMMKQAQQMQDRMQKAQDEIATLEVVGEAGAGLVKVTMLGNHNVRRVELDESLMQDDKDMIEDLLAAACNDAVRRVADETQERMGKVTGGMQLPPGMKMPF.

Disordered regions lie at residues Met-1 to Met-20 and Thr-87 to Phe-108.

Belongs to the YbaB/EbfC family. In terms of assembly, homodimer.

It localises to the cytoplasm. The protein resides in the nucleoid. Binds to DNA and alters its conformation. May be involved in regulation of gene expression, nucleoid organization and DNA protection. The protein is Nucleoid-associated protein PSHAa1202 of Pseudoalteromonas translucida (strain TAC 125).